The chain runs to 121 residues: MIKLRLKRFGKKKEASFRIVACNSTSRRDGRPLQELGFYNPRTKETRLDTEALRTRLTQGAQPTNVVRTLLEKGGLLEKTERPSIAIGKARLEKEKLAKAKTKDGDNDSSKAESESNEAET.

The segment covering 97–114 (LAKAKTKDGDNDSSKAES) has biased composition (basic and acidic residues). Positions 97-121 (LAKAKTKDGDNDSSKAESESNEAET) are disordered.

It belongs to the bacterial ribosomal protein bS16 family.

The polypeptide is Small ribosomal subunit protein bS16 (Prochlorococcus marinus (strain MIT 9301)).